The following is a 318-amino-acid chain: DNA-directed RNA polymerase subunit alpha (318 aa).

Residues 1–232 form an alpha N-terminal domain (alpha-NTD) region; it reads MAHQRIVGPT…NLFSPLQNVR (232 aa). Residues 246–318 are alpha C-terminal domain (alpha-CTD); that stretch reads KMTEVLVEEL…HLPKEKFTKD (73 aa).

The protein belongs to the RNA polymerase alpha chain family. In plastids the minimal PEP RNA polymerase catalytic core is composed of four subunits: alpha, beta, beta', and beta''. When a (nuclear-encoded) sigma factor is associated with the core the holoenzyme is formed, which can initiate transcription.

Its subcellular location is the plastid. The protein resides in the chloroplast. The enzyme catalyses RNA(n) + a ribonucleoside 5'-triphosphate = RNA(n+1) + diphosphate. Functionally, DNA-dependent RNA polymerase catalyzes the transcription of DNA into RNA using the four ribonucleoside triphosphates as substrates. In Chlorokybus atmophyticus (Soil alga), this protein is DNA-directed RNA polymerase subunit alpha.